The sequence spans 645 residues: MSNMDFLPISKEDLKKRNIDVLDFIIVTGDAYVDHPSFGTAIIGRVLEREGFTVGIIAQPNWNNIEDFKKLGKPKYGFLVNSGNIDSMVNHYTASKKKRHDDFYSPGGKSGYRPDRAVIVYCNKIKEAFKDSPIIIGGIEASLRRFAHYDYWDNSVRRSILEDSSADLLIYGMGEKPIVQVSNLLRYGMKIDSIKNVRGTTYIEKDISSLKDYIEIPSFEEVSTNKKSYAEAYKIQYYEQDSIRGKTLVQKHKERYVVQNPPQPPLSQEEMDEVYALPYARTYHPMYEAEGGIPAIKEVKFSITSHRGCYGSCSFCALTFHQGRVIQNRSQDSILKEANMMTNMKDFKGYIHDVGGPTANFRHRACKVQEKHGTCKNKQCVFPKACKNLIVDHKEYLSLLRKIRKIPNVKKVFIRSGIRFDYLMYDKNDEFFKELCEHHISGQLKVAPEHISDKVLNLMGKPTRNVYDSFVKKYYDINKKIHKNQFLVPYLMSSHPGSDLKAAIELAQYIKKMGYTPEQVQDFYPTPGSLSTTMYYTGINPLTEEKVYIPKDQKEKRMQRALLQFSIHDNYDLVKEALIKAHREDLIGNGPDCLIPYNKPYKKSHKKNNAKNNNNHYNKNNNYNKNKDISKKNKKNSLSKHKKRK.

One can recognise a Radical SAM core domain in the interval 295 to 566 (AIKEVKFSIT…RMQRALLQFS (272 aa)). Residues cysteine 309, cysteine 313, and cysteine 316 each coordinate [4Fe-4S] cluster. Residues 598 to 645 (NKPYKKSHKKNNAKNNNNHYNKNNNYNKNKDISKKNKKNSLSKHKKRK) form a disordered region. The segment covering 600–609 (PYKKSHKKNN) has biased composition (basic residues). The span at 610–624 (AKNNNNHYNKNNNYN) shows a compositional bias: low complexity. Residues 632–645 (KNKKNSLSKHKKRK) are compositionally biased toward basic residues.

It belongs to the UPF0313 family. [4Fe-4S] cluster serves as cofactor.

This chain is UPF0313 protein CLM_0251, found in Clostridium botulinum (strain Kyoto / Type A2).